A 100-amino-acid chain; its full sequence is Sec-independent protein translocase protein TatA (100 aa).

The helical transmembrane segment at 1–21 threads the bilayer; sequence MGALRPWHIAVLVVVLILLFG. Basic and acidic residues predominate over residues 46 to 58; the sequence is LHDDDRDLAEKAD. The interval 46–100 is disordered; sequence LHDDDRDLAEKADAQAGYQPMPPQVQQGQHPQQSPYPAPPQQQPVVDPVQRTRDS. Over residues 69 to 78 the composition is skewed to low complexity; sequence QVQQGQHPQQ.

Belongs to the TatA/E family. As to quaternary structure, the Tat system comprises two distinct complexes: a TatABC complex, containing multiple copies of TatA, TatB and TatC subunits, and a separate TatA complex, containing only TatA subunits. Substrates initially bind to the TatABC complex, which probably triggers association of the separate TatA complex to form the active translocon.

It is found in the cell membrane. In terms of biological role, part of the twin-arginine translocation (Tat) system that transports large folded proteins containing a characteristic twin-arginine motif in their signal peptide across membranes. TatA could form the protein-conducting channel of the Tat system. The chain is Sec-independent protein translocase protein TatA from Salinispora tropica (strain ATCC BAA-916 / DSM 44818 / JCM 13857 / NBRC 105044 / CNB-440).